The following is a 180-amino-acid chain: UDP-4-amino-4,6-dideoxy-N-acetyl-beta-L-altrosamine N-acetyltransferase (180 aa).

Residues 13–169 (IDFTNLNDGE…IDVLLYYKDK (157 aa)) form the N-acetyltransferase domain.

It carries out the reaction UDP-4-amino-4,6-dideoxy-N-acetyl-beta-L-altrosamine + acetyl-CoA = UDP-2,4-diacetamido-2,4,6-trideoxy-beta-L-altrose + CoA + H(+). Its function is as follows. Catalyzes the third step in the biosynthesis of pseudaminic acid, a sialic-acid-like sugar that is used to modify flagellin. Mediates N-4 acetylation of UDP-4-amino-4,6-dideoxy-beta-L-AltNAc to form UDP-2,4-diacetamido-2,4,6-trideoxy-beta-L-altropyranose. In Helicobacter pylori (strain ATCC 700392 / 26695) (Campylobacter pylori), this protein is UDP-4-amino-4,6-dideoxy-N-acetyl-beta-L-altrosamine N-acetyltransferase (pseH).